A 279-amino-acid polypeptide reads, in one-letter code: MVTVFGILNLTEDSFFDESRRLDPAGAVTAAIEMLRVGSDVVDVGPAASHPDARPVSPADEIRRIAPLLDALSDQMHRVSIDSFQPETQRYALKRGVGYLNDIQGFPDPALYPDIAEADCRLVVMHSAQRDGIATRTGHLRPEDALDEIVRFFEARVSALRRSGVAADRLILDPGMGFFLSPAPETSLHVLSNLQKLKSALGLPLLVSVSRKSFLGATVGLPVKDLGPASLAAELHAIGNGADYVRTHAPGDLRSAITFSETLAKFRSRDARDRGLDHA.

A Pterin-binding domain is found at 1 to 258 (MVTVFGILNL…APGDLRSAIT (258 aa)). Asn-9 provides a ligand contact to Mg(2+). (7,8-dihydropterin-6-yl)methyl diphosphate-binding positions include Asp-82, Asn-101, Asp-173, Lys-212, and 246–248 (RTH).

This sequence belongs to the DHPS family. Homodimer or homotrimer. Requires Mg(2+) as cofactor.

The catalysed reaction is (7,8-dihydropterin-6-yl)methyl diphosphate + 4-aminobenzoate = 7,8-dihydropteroate + diphosphate. It participates in cofactor biosynthesis; tetrahydrofolate biosynthesis; 7,8-dihydrofolate from 2-amino-4-hydroxy-6-hydroxymethyl-7,8-dihydropteridine diphosphate and 4-aminobenzoate: step 1/2. Its function is as follows. Catalyzes the condensation of para-aminobenzoate (pABA) with 6-hydroxymethyl-7,8-dihydropterin diphosphate (DHPt-PP) to form 7,8-dihydropteroate (H2Pte), the immediate precursor of folate derivatives. This Corynebacterium glutamicum (Brevibacterium saccharolyticum) protein is Dihydropteroate synthase type-1 (sulI).